The following is a 198-amino-acid chain: MKIIRKSILAVLVFTILCGIIYPVSTTVLAQVLFKEEANGSIIEVDGKKYGSELLGQQFTDNKYLWGRIMNINVEMFKDSNGKPLMYSSPSNLSPASEEYEKLVKERVERIRSYNKGKEEEPIPVDLVTSSGSGLDPHISVAAAKYQVDRIAKERNLSVDYVNEIIDKYTTGRFLGIFGEKTVNVLKVNLALDGILRE.

A helical transmembrane segment spans residues 8–28 (ILAVLVFTILCGIIYPVSTTV).

It belongs to the KdpC family. The system is composed of three essential subunits: KdpA, KdpB and KdpC.

It localises to the cell membrane. Functionally, part of the high-affinity ATP-driven potassium transport (or Kdp) system, which catalyzes the hydrolysis of ATP coupled with the electrogenic transport of potassium into the cytoplasm. This subunit acts as a catalytic chaperone that increases the ATP-binding affinity of the ATP-hydrolyzing subunit KdpB by the formation of a transient KdpB/KdpC/ATP ternary complex. In Clostridium perfringens (strain ATCC 13124 / DSM 756 / JCM 1290 / NCIMB 6125 / NCTC 8237 / Type A), this protein is Potassium-transporting ATPase KdpC subunit.